Consider the following 403-residue polypeptide: Phosphoglycerate kinase (403 aa).

Substrate contacts are provided by residues 22-24, Arg37, 60-63, Arg119, and Arg156; these read DLN and HLGR. Residues Lys206, Gly302, Glu333, and 359-362 each bind ATP; that span reads GGDS.

It belongs to the phosphoglycerate kinase family. Monomer.

The protein resides in the cytoplasm. The catalysed reaction is (2R)-3-phosphoglycerate + ATP = (2R)-3-phospho-glyceroyl phosphate + ADP. It participates in carbohydrate degradation; glycolysis; pyruvate from D-glyceraldehyde 3-phosphate: step 2/5. The chain is Phosphoglycerate kinase from Streptomyces avermitilis (strain ATCC 31267 / DSM 46492 / JCM 5070 / NBRC 14893 / NCIMB 12804 / NRRL 8165 / MA-4680).